We begin with the raw amino-acid sequence, 209 residues long: Small ribosomal subunit protein uS3 (209 aa).

The KH type-2 domain occupies 38–107 (IRKIIKNKYY…RVVINIEEIK (70 aa)).

It belongs to the universal ribosomal protein uS3 family. In terms of assembly, part of the 30S ribosomal subunit. Forms a tight complex with proteins S10 and S14.

Functionally, binds the lower part of the 30S subunit head. Binds mRNA in the 70S ribosome, positioning it for translation. In Thermotoga maritima (strain ATCC 43589 / DSM 3109 / JCM 10099 / NBRC 100826 / MSB8), this protein is Small ribosomal subunit protein uS3.